The following is a 455-amino-acid chain: Bifunctional protein GlmU (455 aa).

The pyrophosphorylase stretch occupies residues 1–227 (MLTDIVILAA…ATEALGVNDP (227 aa)). Residues 8 to 11 (LAAG), K22, Q73, 78 to 79 (GT), 100 to 102 (YGD), G137, E152, N167, and N225 contribute to the UDP-N-acetyl-alpha-D-glucosamine site. Position 102 (D102) interacts with Mg(2+). Position 225 (N225) interacts with Mg(2+). The tract at residues 228–248 (VQLAILERVFQRQQLRALQMQ) is linker. The segment at 249 to 455 (GLRVADPARV…HWQRPRRDKK (207 aa)) is N-acetyltransferase. R331 and K349 together coordinate UDP-N-acetyl-alpha-D-glucosamine. H361 (proton acceptor) is an active-site residue. The UDP-N-acetyl-alpha-D-glucosamine site is built by Y364 and N375. Acetyl-CoA contacts are provided by residues A378, 384–385 (NY), S403, A421, and R438. Residues 420-455 (GAGSTITKEVPPGGLTLSRSPQRTIPHWQRPRRDKK) are disordered.

In the N-terminal section; belongs to the N-acetylglucosamine-1-phosphate uridyltransferase family. It in the C-terminal section; belongs to the transferase hexapeptide repeat family. Homotrimer. It depends on Mg(2+) as a cofactor.

Its subcellular location is the cytoplasm. The enzyme catalyses alpha-D-glucosamine 1-phosphate + acetyl-CoA = N-acetyl-alpha-D-glucosamine 1-phosphate + CoA + H(+). It carries out the reaction N-acetyl-alpha-D-glucosamine 1-phosphate + UTP + H(+) = UDP-N-acetyl-alpha-D-glucosamine + diphosphate. Its pathway is nucleotide-sugar biosynthesis; UDP-N-acetyl-alpha-D-glucosamine biosynthesis; N-acetyl-alpha-D-glucosamine 1-phosphate from alpha-D-glucosamine 6-phosphate (route II): step 2/2. It functions in the pathway nucleotide-sugar biosynthesis; UDP-N-acetyl-alpha-D-glucosamine biosynthesis; UDP-N-acetyl-alpha-D-glucosamine from N-acetyl-alpha-D-glucosamine 1-phosphate: step 1/1. The protein operates within bacterial outer membrane biogenesis; LPS lipid A biosynthesis. Functionally, catalyzes the last two sequential reactions in the de novo biosynthetic pathway for UDP-N-acetylglucosamine (UDP-GlcNAc). The C-terminal domain catalyzes the transfer of acetyl group from acetyl coenzyme A to glucosamine-1-phosphate (GlcN-1-P) to produce N-acetylglucosamine-1-phosphate (GlcNAc-1-P), which is converted into UDP-GlcNAc by the transfer of uridine 5-monophosphate (from uridine 5-triphosphate), a reaction catalyzed by the N-terminal domain. The chain is Bifunctional protein GlmU from Acidithiobacillus ferrooxidans (strain ATCC 23270 / DSM 14882 / CIP 104768 / NCIMB 8455) (Ferrobacillus ferrooxidans (strain ATCC 23270)).